Reading from the N-terminus, the 54-residue chain is Potassium channel toxin alpha-KTx 14.x (54 aa).

An N-terminal signal peptide occupies residues 1-23; the sequence is MKIFFAILLILAVCSMAIWTVNG. Disulfide bonds link C30-C46, C36-C51, and C40-C53.

This sequence belongs to the short scorpion toxin superfamily. Potassium channel inhibitor family. Alpha-KTx 14 subfamily. In terms of tissue distribution, expressed by the venom gland.

Its subcellular location is the secreted. Functionally, potassium channels inhibitor. The polypeptide is Potassium channel toxin alpha-KTx 14.x (Olivierus martensii (Manchurian scorpion)).